The sequence spans 228 residues: Casparian strip membrane protein 2 (228 aa).

At 1–65 the chain is on the cytoplasmic side; the sequence is MSTSDAAATV…FRRADRGSRC (65 aa). A helical membrane pass occupies residues 66-86; the sequence is VALLDLVLRVAAFGPALAAAI. The Extracellular segment spans residues 87–113; sequence ATGTSDETLSVFTQFFQFHARFDDFPA. Residues 114-134 traverse the membrane as a helical segment; that stretch reads LLFFMVANAIAAGYLVLSLPF. Residues 135-149 lie on the Cytoplasmic side of the membrane; it reads SAVVVLRPQAIGLRH. The chain crosses the membrane as a helical span at residues 150–170; it reads LLLICDLIIAALLTAAAAAAA. Residues 171-201 lie on the Extracellular side of the membrane; that stretch reads AIVDLAHSGNQRANWVPICMQFHGFCQRTSG. A helical membrane pass occupies residues 202-222; the sequence is AVVASFLAVLVLLFLVILAAF. At 223 to 228 the chain is on the cytoplasmic side; sequence TIRKRC.

Belongs to the Casparian strip membrane proteins (CASP) family. As to quaternary structure, homodimer and heterodimers.

Its subcellular location is the cell membrane. In terms of biological role, regulates membrane-cell wall junctions and localized cell wall deposition. Required for establishment of the Casparian strip membrane domain (CSD) and the subsequent formation of Casparian strips, a cell wall modification of the root endodermis that determines an apoplastic barrier between the intraorganismal apoplasm and the extraorganismal apoplasm and prevents lateral diffusion. The polypeptide is Casparian strip membrane protein 2 (Zea mays (Maize)).